The primary structure comprises 498 residues: ATP synthase subunit beta, chloroplastic (498 aa).

The residue at position 6 (T6) is a Phosphothreonine. At S13 the chain carries Phosphoserine. Residue 172-179 participates in ATP binding; the sequence is GGAGVGKT.

The protein belongs to the ATPase alpha/beta chains family. As to quaternary structure, F-type ATPases have 2 components, CF(1) - the catalytic core - and CF(0) - the membrane proton channel. CF(1) has five subunits: alpha(3), beta(3), gamma(1), delta(1), epsilon(1). CF(0) has four main subunits: a(1), b(1), b'(1) and c(9-12).

The protein localises to the plastid. It is found in the chloroplast thylakoid membrane. It catalyses the reaction ATP + H2O + 4 H(+)(in) = ADP + phosphate + 5 H(+)(out). Functionally, produces ATP from ADP in the presence of a proton gradient across the membrane. The catalytic sites are hosted primarily by the beta subunits. The sequence is that of ATP synthase subunit beta, chloroplastic from Raphanus sativus (Radish).